The chain runs to 648 residues: MHYYGNRNEYDILNASSNDSNMSNTYPRYPLANPQQDLMQNTNYKDWLNVCEGYHIENPREASVRAGLGKGLGIVSTIVGFFGGSIILDTIGLFYQISELLWPEDDTQQYTWQDIMNHVEDLIDKRITEVIRGNAIRTLADLQGKVDDYNNWLKKWKDDPKSTGNLSTLVTKFTALDSDFNGAIRTVNNQGSPGYELLLLPVYAQIANLHLLLLRDAQIYGDKWWSARANARDNYYQIQLEKTKEYTEYCINWYNKGLNDFRTAGQWVNFNRYRREMTLTVLDIISMFPIYDARLYPTEVKTELTREIYSDVINGEIYGLMTPYFSFEKAESLYTRAPHLFTWLKGFRFVTNSISYWTFLSGGQNKYSYTNNSSINEGSFRGQDTDYGGTSSTINIPSNSYVYNLWTENYEYIYPWGDPVNITKMNFSVTDNNSSKELIYGAHRTNKPVVRTDFDFLTNKEGTELAKYNDYNHILSYMLINGETFGQKRHGYSFAFTHSSVDPNNTIAANKITQIPVVKASSINGSISIEKGPGFTGGDLVKMRADSGLTMRFKAELLDKKYRVRIRYKCNYSSKLILRKWKGEGYIQQQIHNISPTYGAFSYLESFTITTTENIFDLTMEVTYPYGRQFVEDIPSLILDKIEFLPTN.

This sequence belongs to the delta endotoxin family.

Functionally, promotes colloidosmotic lysis by binding to the midgut epithelial cells of mosquitos. The polypeptide is Pesticidal crystal protein Cry19Aa (cry19Aa) (Bacillus thuringiensis subsp. jegathesan).